Consider the following 82-residue polypeptide: Small ribosomal subunit protein bS18 (82 aa).

The segment at 1–20 is disordered; that stretch reads MSEASSAPVRRPFHRRRKTC.

It belongs to the bacterial ribosomal protein bS18 family. In terms of assembly, part of the 30S ribosomal subunit. Forms a tight heterodimer with protein bS6.

Its function is as follows. Binds as a heterodimer with protein bS6 to the central domain of the 16S rRNA, where it helps stabilize the platform of the 30S subunit. The protein is Small ribosomal subunit protein bS18 of Rhizobium etli (strain CIAT 652).